Reading from the N-terminus, the 121-residue chain is Large ribosomal subunit protein bL17 (121 aa).

The protein belongs to the bacterial ribosomal protein bL17 family. Part of the 50S ribosomal subunit. Contacts protein L32.

This Rubrobacter xylanophilus (strain DSM 9941 / JCM 11954 / NBRC 16129 / PRD-1) protein is Large ribosomal subunit protein bL17.